The sequence spans 72 residues: MAKEDNFELEGEVIDTLPNTTFRVKLENGHVVTAHISGKMRKNYIRILTGDKVKVEMTPYDLSKGRITYRAR.

The 72-residue stretch at 1 to 72 (MAKEDNFELE…SKGRITYRAR (72 aa)) folds into the S1-like domain.

The protein belongs to the IF-1 family. Component of the 30S ribosomal translation pre-initiation complex which assembles on the 30S ribosome in the order IF-2 and IF-3, IF-1 and N-formylmethionyl-tRNA(fMet); mRNA recruitment can occur at any time during PIC assembly.

It localises to the cytoplasm. Its function is as follows. One of the essential components for the initiation of protein synthesis. Stabilizes the binding of IF-2 and IF-3 on the 30S subunit to which N-formylmethionyl-tRNA(fMet) subsequently binds. Helps modulate mRNA selection, yielding the 30S pre-initiation complex (PIC). Upon addition of the 50S ribosomal subunit IF-1, IF-2 and IF-3 are released leaving the mature 70S translation initiation complex. This Saccharophagus degradans (strain 2-40 / ATCC 43961 / DSM 17024) protein is Translation initiation factor IF-1.